The chain runs to 620 residues: Proline--tRNA ligase (620 aa).

It belongs to the class-II aminoacyl-tRNA synthetase family. ProS type 1 subfamily. Homodimer.

Its subcellular location is the cytoplasm. The enzyme catalyses tRNA(Pro) + L-proline + ATP = L-prolyl-tRNA(Pro) + AMP + diphosphate. Functionally, catalyzes the attachment of proline to tRNA(Pro) in a two-step reaction: proline is first activated by ATP to form Pro-AMP and then transferred to the acceptor end of tRNA(Pro). As ProRS can inadvertently accommodate and process non-cognate amino acids such as alanine and cysteine, to avoid such errors it has two additional distinct editing activities against alanine. One activity is designated as 'pretransfer' editing and involves the tRNA(Pro)-independent hydrolysis of activated Ala-AMP. The other activity is designated 'posttransfer' editing and involves deacylation of mischarged Ala-tRNA(Pro). The misacylated Cys-tRNA(Pro) is not edited by ProRS. This Streptococcus thermophilus (strain CNRZ 1066) protein is Proline--tRNA ligase.